The chain runs to 1502 residues: tRNA (32-2'-O)-methyltransferase regulator trm732 (1502 aa).

Belongs to the THADA family.

It localises to the cytoplasm. The protein resides in the nucleus. Functionally, together with methyltransferase trm7, methylates the 2'-O-ribose of nucleotides at position 32 of the anticodon loop of substrate tRNAs. The polypeptide is tRNA (32-2'-O)-methyltransferase regulator trm732 (Schizosaccharomyces pombe (strain 972 / ATCC 24843) (Fission yeast)).